Reading from the N-terminus, the 1024-residue chain is Multidrug resistance protein MdtC (1024 aa).

Helical transmembrane passes span 15–35 (WLLT…LPVA), 333–353 (EVEQ…FAFL), 360–380 (LIPA…MYLC), 387–407 (LSLM…IVVL), 431–451 (VGFT…PLLL), 463–483 (FAIT…TLTP), 528–548 (WGLL…ISIP), 853–873 (LWLI…LYES), 897–917 (LFNA…IGIV), 953–973 (PIIM…LGSG), and 984–1004 (ITIV…TPVV).

This sequence belongs to the resistance-nodulation-cell division (RND) (TC 2.A.6) family. MdtC subfamily. As to quaternary structure, part of a tripartite efflux system composed of MdtA, MdtB and MdtC. MdtC forms a heteromultimer with MdtB.

It is found in the cell inner membrane. This chain is Multidrug resistance protein MdtC, found in Erwinia tasmaniensis (strain DSM 17950 / CFBP 7177 / CIP 109463 / NCPPB 4357 / Et1/99).